A 558-amino-acid polypeptide reads, in one-letter code: Polysialic acid transport protein KpsD (558 aa).

The N-terminal stretch at 1-20 (MKLFKSILLIAACHAAQASA) is a signal peptide.

It to E.coli K1 KpsD.

It is found in the periplasm. Its function is as follows. Involved in the translocation of the polysialic acid capsule across the outer membrane to the cell surface. May function as the periplasmic binding element of the PSA transport system, in which it transiently interacts with the membrane component of the transporter, binds polysaccharide and transports the polymer to a component in the outer membrane. In Escherichia coli, this protein is Polysialic acid transport protein KpsD (kpsD).